The sequence spans 269 residues: Peptide deformylase 1B, chloroplastic (269 aa).

The transit peptide at 1-51 (MAARLHLRLGPRLRGFASSFAPLLAAHPRALPLSRMGSVAPLAAARARRGF) directs the protein to the chloroplast. Fe cation is bound by residues Cys168 and His210. Residue Glu211 is part of the active site. Residue His214 participates in Fe cation binding.

Belongs to the polypeptide deformylase family. In terms of assembly, homodimer. It depends on Fe(2+) as a cofactor. In terms of tissue distribution, mainly expressed in mature leaves and sheaths.

It is found in the plastid. The protein resides in the chloroplast stroma. The protein localises to the mitochondrion. It carries out the reaction N-terminal N-formyl-L-methionyl-[peptide] + H2O = N-terminal L-methionyl-[peptide] + formate. With respect to regulation, inhibited by actinonin. Functionally, removes the formyl group from the N-terminal Met of newly synthesized proteins. This Oryza sativa subsp. japonica (Rice) protein is Peptide deformylase 1B, chloroplastic (PDF1B).